The following is a 329-amino-acid chain: MMSSSSSEIDVVKTRIPTYDEDDDTILYAYETKPDFVNKEPNTVSDASCNTEEQQKTVNDVLIHCQVIYDAMQNLDKKIDVIRRKVSKIQRFRARSLWTNRKRYGYKNYSYQLAKKLKRQKMKKNEVHESFSYPESYSPTLPVSRRENNSPSNLPRPSFRMEEYQRAEPEEDPILSRTPSPVHPSDFSEHNYQPYYASDGAMHGSSSGPCLGNPGANSIYNTYSTDHASAAQPSVTSSPFENDRYIEEGSITKHPSTWSVEAVVLFLKQTDPLALCPLVDLFRSHEIDGKALLLLTSDVLLKHLGVKLGTAVKLCYYIDRLKQGKCFEN.

Residues 125–194 (NEVHESFSYP…SDFSEHNYQP (70 aa)) are disordered. Phosphoserine is present on serine 138. A compositionally biased stretch (basic and acidic residues) spans 159–168 (FRMEEYQRAE). Serine 238 carries the post-translational modification Phosphoserine. The SAM domain occupies 258–325 (WSVEAVVLFL…YYIDRLKQGK (68 aa)).

It belongs to the SCM family. As to expression, highly expressed in testis and pancreas. Preferentially expressed in the germ stem cells of testis.

It is found in the nucleus. Its function is as follows. Putative Polycomb group (PcG) protein. PcG proteins act by forming multiprotein complexes, which are required to maintain the transcriptionally repressive state of homeotic genes throughout development. May be involved in spermatogenesis during sexual maturation. The sequence is that of Sex comb on midleg-like protein 1 (SCML1) from Macaca mulatta (Rhesus macaque).